Here is a 296-residue protein sequence, read N- to C-terminus: Glycerol-3-phosphate dehydrogenase [NAD(P)+] (296 aa).

Residues Trp-12, Arg-31, and Lys-80 each coordinate NADPH. Positions 80, 108, and 110 each coordinate sn-glycerol 3-phosphate. NADPH is bound at residue Ala-112. Positions 162, 215, 225, 226, and 227 each coordinate sn-glycerol 3-phosphate. Lys-162 functions as the Proton acceptor in the catalytic mechanism. Position 226 (Arg-226) interacts with NADPH. NADPH-binding residues include Val-250 and Glu-252.

It belongs to the NAD-dependent glycerol-3-phosphate dehydrogenase family.

It localises to the cytoplasm. It carries out the reaction sn-glycerol 3-phosphate + NAD(+) = dihydroxyacetone phosphate + NADH + H(+). It catalyses the reaction sn-glycerol 3-phosphate + NADP(+) = dihydroxyacetone phosphate + NADPH + H(+). The protein operates within membrane lipid metabolism; glycerophospholipid metabolism. In terms of biological role, catalyzes the reduction of the glycolytic intermediate dihydroxyacetone phosphate (DHAP) to sn-glycerol 3-phosphate (G3P), the key precursor for phospholipid synthesis. In Sulfurimonas denitrificans (strain ATCC 33889 / DSM 1251) (Thiomicrospira denitrificans (strain ATCC 33889 / DSM 1251)), this protein is Glycerol-3-phosphate dehydrogenase [NAD(P)+].